The sequence spans 734 residues: Homoaconitase, mitochondrial (734 aa).

A mitochondrion-targeting transit peptide spans 1–25 (MGASNLLRFGAVTRISTPLLSRRSL). [4Fe-4S] cluster contacts are provided by Cys-367, Cys-427, and Cys-430.

Belongs to the aconitase/IPM isomerase family. The cofactor is [4Fe-4S] cluster.

The protein resides in the mitochondrion. It carries out the reaction (2R,3S)-homoisocitrate = cis-homoaconitate + H2O. It functions in the pathway amino-acid biosynthesis; L-lysine biosynthesis via AAA pathway; L-alpha-aminoadipate from 2-oxoglutarate: step 3/5. In terms of biological role, catalyzes the reversible hydration of cis-homoaconitate to (2R,3S)-homoisocitrate, a step in the alpha-aminoadipate pathway for lysine biosynthesis. The protein is Homoaconitase, mitochondrial (LYS4) of Mycosarcoma maydis (Corn smut fungus).